Here is a 205-residue protein sequence, read N- to C-terminus: Peptidyl-tRNA hydrolase (205 aa).

TRNA is bound at residue Y18. Catalysis depends on H23, which acts as the Proton acceptor. Positions 69, 71, and 117 each coordinate tRNA.

Belongs to the PTH family. In terms of assembly, monomer.

It localises to the cytoplasm. It carries out the reaction an N-acyl-L-alpha-aminoacyl-tRNA + H2O = an N-acyl-L-amino acid + a tRNA + H(+). Functionally, hydrolyzes ribosome-free peptidyl-tRNAs (with 1 or more amino acids incorporated), which drop off the ribosome during protein synthesis, or as a result of ribosome stalling. Catalyzes the release of premature peptidyl moieties from peptidyl-tRNA molecules trapped in stalled 50S ribosomal subunits, and thus maintains levels of free tRNAs and 50S ribosomes. In Thermosynechococcus vestitus (strain NIES-2133 / IAM M-273 / BP-1), this protein is Peptidyl-tRNA hydrolase.